Reading from the N-terminus, the 1098-residue chain is NACHT, LRR and PYD domains-containing protein 5 (1098 aa).

One can recognise a Pyrin domain in the interval 1–97; the sequence is MREAKIAPLS…SEMARDEMKK (97 aa). The segment at 104–131 is disordered; the sequence is SEDSAPTKTDQGPSMKEVPGPREDPQDS. Over residues 122–131 the composition is skewed to basic and acidic residues; that stretch reads PGPREDPQDS. Residues 180 to 503 enclose the NACHT domain; sequence LTVVLHGPPG…ALFYVLRGVE (324 aa). 186-193 is a binding site for ATP; that stretch reads GPPGVGKS. LRR repeat units follow at residues 851-871, 880-900, 908-928, 937-958, 965-985, 993-1013, and 1021-1041; these read GLTH…SLLC, GLQK…GFLA, HLTH…NLLC, PLRD…SLSN, RLRS…AALC, TLTR…KALS, and HLAS…TTLC.

The protein belongs to the NLRP family. In terms of assembly, component of the subcortical maternal complex (SCMC), at least composed of NLRP5, KHDC3, OOEP, and TLE6. Within the complex, interacts with OOEP, KHDC3 and TLE6. The SCMC may facilitate translocation of its components between the nuclear and cytoplasmic compartments. As part of the SCMC interacts with the SCMC-associated protein ZBED3. As part of the SCMC interacts with the SCMC-associated protein CFL1/Cofilin-1. Interacts with PRKCE. Interacts with TUBB3 at cytoskeleton microtubules. In terms of processing, phosphorylated by PRKCE. As to expression, oocyte-specific.

Its subcellular location is the cytoplasm. It is found in the cytoplasmic vesicle. The protein localises to the secretory vesicle. The protein resides in the cortical granule. It localises to the mitochondrion. Its subcellular location is the nucleus. It is found in the nucleolus. The protein localises to the golgi apparatus. In terms of biological role, component of the subcortical maternal complex (SCMC), a multiprotein complex that plays a key role in early embryonic development. The SCMC complex is a structural constituent of cytoplasmic lattices, which consist in fibrous structures found in the cytoplasm of oocytes and preimplantation embryos. They are required to store maternal proteins critical for embryonic development, such as proteins that control epigenetic reprogramming of the preimplantation embryo, and prevent their degradation or activation. Required for the localization of cortical granules to the cortex of oocytes, via association with the cortical actin scaffold. Required for cortical actin clearance prior to oocyte exocytosis and prevention of polyspermy. Involved in regulating post-fertilization Ca(2+) release and endoplasmic reticulum storage (ER) storage via regulation of cellular localization. May be involved in the localization of mitochondria to the cytoplasm and perinuclear region in oocytes and early stage embryos, independent of its role in CPL formation. This chain is NACHT, LRR and PYD domains-containing protein 5 (NLRP5), found in Bos taurus (Bovine).